The chain runs to 212 residues: Large ribosomal subunit protein uL3 (212 aa).

At glutamine 153 the chain carries N5-methylglutamine.

It belongs to the universal ribosomal protein uL3 family. Part of the 50S ribosomal subunit. Forms a cluster with proteins L14 and L19. Methylated by PrmB.

One of the primary rRNA binding proteins, it binds directly near the 3'-end of the 23S rRNA, where it nucleates assembly of the 50S subunit. The polypeptide is Large ribosomal subunit protein uL3 (Marinobacter nauticus (strain ATCC 700491 / DSM 11845 / VT8) (Marinobacter aquaeolei)).